A 724-amino-acid polypeptide reads, in one-letter code: Semaphorin-2A (724 aa).

Residues 1 to 25 form the signal peptide; that stretch reads MSLLQLSPLLALLLLLCSSVSETAA. The Sema domain maps to 45–522; that stretch reads QGNNNYGKHG…TDHRIKQIDL (478 aa). The N-linked (GlcNAc...) asparagine glycan is linked to Asn-95. Cys-118 and Cys-129 form a disulfide bridge. Residues Asn-163, Asn-190, Asn-229, and Asn-314 are each glycosylated (N-linked (GlcNAc...) asparagine). Cystine bridges form between Cys-291–Cys-399 and Cys-315–Cys-358. Asn-401 is a glycosylation site (N-linked (GlcNAc...) asparagine). 2 disulfides stabilise this stretch: Cys-525-Cys-541 and Cys-535-Cys-550. The 112-residue stretch at 552-663 folds into the Ig-like C2-type domain; that stretch reads PYELDLLQDV…LCSYNITVDA (112 aa). Asn-563 carries an N-linked (GlcNAc...) asparagine glycan. Cys-590 and Cys-647 are oxidised to a cystine. 3 N-linked (GlcNAc...) asparagine glycosylation sites follow: Asn-658, Asn-670, and Asn-708.

The protein belongs to the semaphorin family. As to quaternary structure, interacts with PlexB. As to expression, transiently expressed by a single large muscle during motoneuron outgrowth and synapse formation.

It localises to the secreted. Ligand for transmembrane receptor PlexB. Plays a role in growth cone guidance. Required for both proper adult behavior and survival. Can function as a selective target-derived signal that inhibits the formation of specific synaptic terminal arbors. Function in neurons is essential for adult survival, motor neuron survival, and is important for climbing behavior and activity. During embryogenesis, plays an important role in correct salivary gland positioning. The polypeptide is Semaphorin-2A (Drosophila melanogaster (Fruit fly)).